The following is a 204-amino-acid chain: MNYDSILDNISNIIKIDENKKEKLIQYASLVIDYNKNVNITGAKTEEDFFNDHIADCLLALDIFYDYDNIIDIGSGSGLPSIPLAIIFNDKKFTLCESKNKKAEFLRLAKDKLGLDNIEVKCINAYEIKEKYDTITSRAFSDISTLLKIFNKLKTKKSKLILYKGKIEKIEEELKEANIQKNKYNIEIKKLESKDKERHIVIIS.

S-adenosyl-L-methionine contacts are provided by residues G74, L79, A125–Y126, and R138.

The protein belongs to the methyltransferase superfamily. RNA methyltransferase RsmG family.

The protein resides in the cytoplasm. Specifically methylates the N7 position of a guanine in 16S rRNA. The polypeptide is Ribosomal RNA small subunit methyltransferase G (Brachyspira hyodysenteriae (strain ATCC 49526 / WA1)).